A 456-amino-acid polypeptide reads, in one-letter code: Adenylosuccinate lyase (456 aa).

N(6)-(1,2-dicarboxyethyl)-AMP contacts are provided by residues 15–16 (RY), 90–92 (NHD), and 122–123 (TS). Histidine 171 (proton donor/acceptor) is an active-site residue. Residue glutamine 247 participates in N(6)-(1,2-dicarboxyethyl)-AMP binding. Serine 295 functions as the Proton donor/acceptor in the catalytic mechanism. N(6)-(1,2-dicarboxyethyl)-AMP contacts are provided by residues serine 296, 301-303 (KVN), asparagine 309, arginine 335, and 340-344 (STVLR).

It belongs to the lyase 1 family. Adenylosuccinate lyase subfamily. Homotetramer. Residues from neighboring subunits contribute catalytic and substrate-binding residues to each active site.

The catalysed reaction is N(6)-(1,2-dicarboxyethyl)-AMP = fumarate + AMP. It carries out the reaction (2S)-2-[5-amino-1-(5-phospho-beta-D-ribosyl)imidazole-4-carboxamido]succinate = 5-amino-1-(5-phospho-beta-D-ribosyl)imidazole-4-carboxamide + fumarate. It participates in purine metabolism; AMP biosynthesis via de novo pathway; AMP from IMP: step 2/2. Its pathway is purine metabolism; IMP biosynthesis via de novo pathway; 5-amino-1-(5-phospho-D-ribosyl)imidazole-4-carboxamide from 5-amino-1-(5-phospho-D-ribosyl)imidazole-4-carboxylate: step 2/2. Catalyzes two reactions in de novo purine nucleotide biosynthesis. Catalyzes the breakdown of 5-aminoimidazole- (N-succinylocarboxamide) ribotide (SAICAR or 2-[5-amino-1-(5-phospho-beta-D-ribosyl)imidazole-4-carboxamido]succinate) to 5-aminoimidazole-4-carboxamide ribotide (AICAR or 5-amino-1-(5-phospho-beta-D-ribosyl)imidazole-4-carboxamide) and fumarate, and of adenylosuccinate (ADS or N(6)-(1,2-dicarboxyethyl)-AMP) to adenosine monophosphate (AMP) and fumarate. The sequence is that of Adenylosuccinate lyase (purB) from Haemophilus influenzae (strain ATCC 51907 / DSM 11121 / KW20 / Rd).